We begin with the raw amino-acid sequence, 122 residues long: Large ribosomal subunit protein uL18 (122 aa).

It belongs to the universal ribosomal protein uL18 family. In terms of assembly, part of the 50S ribosomal subunit; part of the 5S rRNA/L5/L18/L25 subcomplex. Contacts the 5S and 23S rRNAs.

This is one of the proteins that bind and probably mediate the attachment of the 5S RNA into the large ribosomal subunit, where it forms part of the central protuberance. This chain is Large ribosomal subunit protein uL18, found in Fervidobacterium nodosum (strain ATCC 35602 / DSM 5306 / Rt17-B1).